The chain runs to 192 residues: Phosphoheptose isomerase (192 aa).

Residues 37 to 192 (LADSFKAGGK…IQLIEKEMVK (156 aa)) enclose the SIS domain. Residue 52–54 (NGG) coordinates substrate. Zn(2+) is bound by residues histidine 61 and glutamate 65. Substrate is bound by residues glutamate 65, 93 to 94 (ND), 119 to 121 (STS), serine 124, and glutamine 172. Zn(2+) is bound by residues glutamine 172 and histidine 180.

It belongs to the SIS family. GmhA subfamily. Homotetramer. The cofactor is Zn(2+).

It is found in the cytoplasm. The enzyme catalyses 2 D-sedoheptulose 7-phosphate = D-glycero-alpha-D-manno-heptose 7-phosphate + D-glycero-beta-D-manno-heptose 7-phosphate. It participates in carbohydrate biosynthesis; D-glycero-D-manno-heptose 7-phosphate biosynthesis; D-glycero-alpha-D-manno-heptose 7-phosphate and D-glycero-beta-D-manno-heptose 7-phosphate from sedoheptulose 7-phosphate: step 1/1. Functionally, catalyzes the isomerization of sedoheptulose 7-phosphate in D-glycero-D-manno-heptose 7-phosphate. The sequence is that of Phosphoheptose isomerase from Salmonella dublin (strain CT_02021853).